The following is a 380-amino-acid chain: Mitogen-activated protein kinase 3 (380 aa).

Alanine 2 bears the N-acetylalanine mark. A Protein kinase domain is found at 43–331 (YTQLQYIGEG…VEEALAHPYL (289 aa)). ATP contacts are provided by residues 49–57 (IGEGAYGMV) and lysine 72. The Proton acceptor role is filled by aspartate 167. Phosphothreonine is present on threonine 199. Position 203 is a phosphothreonine; by MAP2K1 and MAP2K2 (threonine 203). The short motif at 203–205 (TEY) is the TXY element. At tyrosine 205 the chain carries Phosphotyrosine; by MAP2K1 and MAP2K2. Threonine 208 is subject to Phosphothreonine; by autocatalysis.

It belongs to the protein kinase superfamily. CMGC Ser/Thr protein kinase family. MAP kinase subfamily. As to quaternary structure, binds both upstream activators and downstream substrates in multimolecular complexes. Found in a complex with at least BRAF, HRAS, MAP2K1/MEK1, MAPK3 and RGS14. Interacts with TPR. Interacts with ADAM15, ARRB2, CANX, DAPK1 (via death domain), HSF4, IER3, MAP2K1/MEK1, NISCH, and SGK1. Interacts with MORG1. Interacts with PEA15. Interacts with isoform 1 of MKNK2 and this binding prevents from dephosphorylation and inactivation. Interacts with CDKN2AIP. Interacts with HSF1 (via D domain and preferentially with hyperphosphorylated form); this interaction occurs upon heat shock. Interacts with CAVIN4. Interacts with GIT1; this interaction is necessary for MAPK3 localization to focal adhesions. Interacts with ZNF263. Interacts with EBF4. The cofactor is Mg(2+). Post-translationally, dually phosphorylated on Thr-203 and Tyr-205, which activates the enzyme. Ligand-activated ALK induces tyrosine phosphorylation. Dephosphorylated by PTPRJ at Tyr-205. Autophosphorylated on threonine and tyrosine residues in vitro. Phosphorylated upon FLT3 and KIT signaling. Ubiquitinated by TRIM15 via 'Lys-63'-linked ubiquitination; leading to activation. Deubiquitinated by CYLD.

The protein localises to the cytoplasm. It localises to the nucleus. It is found in the membrane. The protein resides in the caveola. Its subcellular location is the cell junction. The protein localises to the focal adhesion. The catalysed reaction is L-seryl-[protein] + ATP = O-phospho-L-seryl-[protein] + ADP + H(+). It carries out the reaction L-threonyl-[protein] + ATP = O-phospho-L-threonyl-[protein] + ADP + H(+). With respect to regulation, phosphorylated by MAP2K1/MEK1 and MAP2K2/MEK2 on Thr-203 and Tyr-205 in response to external stimuli like insulin or NGF. Both phosphorylations are required for activity. This phosphorylation causes dramatic conformational changes, which enable full activation and interaction of MAPK1/ERK2 with its substrates. Dephosphorylated and inactivated by DUSP3, DUSP6 and DUSP9. Serine/threonine kinase which acts as an essential component of the MAP kinase signal transduction pathway. MAPK1/ERK2 and MAPK3/ERK1 are the 2 MAPKs which play an important role in the MAPK/ERK cascade. They participate also in a signaling cascade initiated by activated KIT and KITLG/SCF. Depending on the cellular context, the MAPK/ERK cascade mediates diverse biological functions such as cell growth, adhesion, survival and differentiation through the regulation of transcription, translation, cytoskeletal rearrangements. The MAPK/ERK cascade also plays a role in initiation and regulation of meiosis, mitosis, and postmitotic functions in differentiated cells by phosphorylating a number of transcription factors. About 160 substrates have already been discovered for ERKs. Many of these substrates are localized in the nucleus, and seem to participate in the regulation of transcription upon stimulation. However, other substrates are found in the cytosol as well as in other cellular organelles, and those are responsible for processes such as translation, mitosis and apoptosis. Moreover, the MAPK/ERK cascade is also involved in the regulation of the endosomal dynamics, including lysosome processing and endosome cycling through the perinuclear recycling compartment (PNRC); as well as in the fragmentation of the Golgi apparatus during mitosis. The substrates include transcription factors (such as ATF2, BCL6, ELK1, ERF, FOS, HSF4 or SPZ1), cytoskeletal elements (such as CANX, CTTN, GJA1, MAP2, MAPT, PXN, SORBS3 or STMN1), regulators of apoptosis (such as BAD, BTG2, CASP9, DAPK1, IER3, MCL1 or PPARG), regulators of translation (such as EIF4EBP1) and a variety of other signaling-related molecules (like ARHGEF2, DEPTOR, FRS2 or GRB10). Protein kinases (such as RAF1, RPS6KA1/RSK1, RPS6KA3/RSK2, RPS6KA2/RSK3, RPS6KA6/RSK4, SYK, MKNK1/MNK1, MKNK2/MNK2, RPS6KA5/MSK1, RPS6KA4/MSK2, MAPKAPK3 or MAPKAPK5) and phosphatases (such as DUSP1, DUSP4, DUSP6 or DUSP16) are other substrates which enable the propagation the MAPK/ERK signal to additional cytosolic and nuclear targets, thereby extending the specificity of the cascade. The polypeptide is Mitogen-activated protein kinase 3 (Mapk3) (Mus musculus (Mouse)).